The chain runs to 64 residues: Large ribosomal subunit protein bL35 (64 aa).

The disordered stretch occupies residues 18–39; the sequence is GSGLVKHYPSNKHHKNTHKKEN. The segment covering 26 to 39 has biased composition (basic residues); the sequence is PSNKHHKNTHKKEN.

It belongs to the bacterial ribosomal protein bL35 family.

The polypeptide is Large ribosomal subunit protein bL35 (Symbiobacterium thermophilum (strain DSM 24528 / JCM 14929 / IAM 14863 / T)).